The sequence spans 151 residues: UPF0735 ACT domain-containing protein SH1278 (151 aa).

One can recognise an ACT domain in the interval 74–149; that stretch reads TLILYVNDIV…HVSKVELISM (76 aa).

The protein belongs to the UPF0735 family.

This Staphylococcus haemolyticus (strain JCSC1435) protein is UPF0735 ACT domain-containing protein SH1278.